The primary structure comprises 832 residues: FAST kinase domain-containing protein 1, mitochondrial (832 aa).

Residues 765–825 form the RAP domain; the sequence is VAIEFLDSKA…KDAWMDYLRK (61 aa).

The protein belongs to the FAST kinase family.

Its subcellular location is the mitochondrion. Functionally, may regulate the stability of some mitochondrial mRNA species. This chain is FAST kinase domain-containing protein 1, mitochondrial (fastkd1), found in Xenopus laevis (African clawed frog).